The following is a 583-amino-acid chain: Inactive tyrosine-protein kinase RYK (583 aa).

Positions 1 to 18 (MILRYLIFFAQLWALCLA) are cleaved as a signal peptide. The Extracellular portion of the chain corresponds to 19 to 173 (NVNMFISKEE…EVDDTDSIDK (155 aa)). In terms of domain architecture, WIF spans 22–147 (MFISKEEMNR…KVKLRQEKIC (126 aa)). N-linked (GlcNAc...) asparagine glycosylation is found at N30 and N46. An intrachain disulfide couples C113 to C147. A helical membrane pass occupies residues 174-194 (AFFVIICIAAAFLLIVAATLI). At 195-583 (CYFKRSKKED…DFNIQLSQYI (389 aa)) the chain is on the cytoplasmic side. A Protein kinase domain is found at 281–583 (FQSLPLDMEG…DFNIQLSQYI (303 aa)). ATP contacts are provided by residues 287–295 (DMEGTFGEV) and K327.

Belongs to the protein kinase superfamily. Tyr protein kinase family.

It is found in the cell membrane. Its subcellular location is the basolateral cell membrane. Has no detectable kinase activity in vitro and is unlikely to function as a tyrosine kinase in vivo. Receptor which may act as a receptor for Wnt ligand mom-2. Plays a role in controlling P7.p vulva precursor cell lineage orientation during vulva development. Regulates pop-1 asymmetric distribution in P7.p and its daughter cells. Plays a role in the migration of ALM neurons during embryogenesis. This is Inactive tyrosine-protein kinase RYK from Caenorhabditis elegans.